Consider the following 232-residue polypeptide: Ubiquinone biosynthesis O-methyltransferase (232 aa).

Arg-36, Gly-55, Asp-76, and Leu-120 together coordinate S-adenosyl-L-methionine.

Belongs to the methyltransferase superfamily. UbiG/COQ3 family.

The enzyme catalyses a 3-demethylubiquinol + S-adenosyl-L-methionine = a ubiquinol + S-adenosyl-L-homocysteine + H(+). It catalyses the reaction a 3-(all-trans-polyprenyl)benzene-1,2-diol + S-adenosyl-L-methionine = a 2-methoxy-6-(all-trans-polyprenyl)phenol + S-adenosyl-L-homocysteine + H(+). The protein operates within cofactor biosynthesis; ubiquinone biosynthesis. Functionally, O-methyltransferase that catalyzes the 2 O-methylation steps in the ubiquinone biosynthetic pathway. The protein is Ubiquinone biosynthesis O-methyltransferase of Pseudomonas paraeruginosa (strain DSM 24068 / PA7) (Pseudomonas aeruginosa (strain PA7)).